The following is a 317-amino-acid chain: Ribosomal protein L11 methyltransferase (317 aa).

The S-adenosyl-L-methionine site is built by T158, G179, D201, and N244.

The protein belongs to the methyltransferase superfamily. PrmA family.

The protein resides in the cytoplasm. The enzyme catalyses L-lysyl-[protein] + 3 S-adenosyl-L-methionine = N(6),N(6),N(6)-trimethyl-L-lysyl-[protein] + 3 S-adenosyl-L-homocysteine + 3 H(+). In terms of biological role, methylates ribosomal protein L11. The chain is Ribosomal protein L11 methyltransferase from Streptococcus agalactiae serotype III (strain NEM316).